The chain runs to 674 residues: Ribonuclease E (674 aa).

One can recognise an S1 motif domain in the interval 35-117; the sequence is GDIYLGLVDN…LTGNISMPGR (83 aa). Residues D296 and D339 each contribute to the Mg(2+) site. Zn(2+) is bound by residues C397 and C400. 2 disordered regions span residues 458 to 529 and 626 to 674; these read PLDL…RRVE and QPRE…SSAE. Basic and acidic residues-rich tracts occupy residues 484 to 493 and 509 to 529; these read GSEFSEKENI and TKEKVTGTAPPRRERPSRRVE. Basic residues predominate over residues 663–674; the sequence is RPGRRRRRSSAE. Positions 665 to 673 match the C4 Arg-rich motif, probably responsible for interaction with PNPase motif; it reads GRRRRRSSA.

This sequence belongs to the RNase E/G family. In terms of assembly, fractionates in a 250-300 kDa region, which is too small to be the equivalent of an RNA degradosome, as occurs with E.coli RNase E. Interacts with polynucleotide phosphorylase (PNPase, pnp), probably via the C4 Arg-rich motif (residues 665-673). Mg(2+) is required as a cofactor.

It localises to the cytoplasm. The protein resides in the cell inner membrane. The catalysed reaction is Endonucleolytic cleavage of single-stranded RNA in A- and U-rich regions.. Endoribonuclease that plays a central role in rRNA processing and mRNA decay, and probably tRNA processing. Acts on 9S rRNA (the precursor of 5S rRNA) and RNAI, a molecule that controls the replication of ColE1 plasmid. Upon expression in E.coli does not purify with endogenous degradosome proteins. Prefers 5'-monophosphorylated substrates over 5'-triphosphorylated substrates. Complements an rne temperature-sensitive mutation in E.coli, despite being considerably shorter and not able to interact with the E.coli degradosome. Cleaves AU-rich sequences in vitro, tested with psbA2 mRNA. Complements both an rne temperature-sensitive mutation and an rng deletion in E.coli. Acts in the degradation of psaL mRNA in the presence but not the absence of the sRNA PsrR1. Cleaves the rimO-crhR transcript, contributing to the very short half-life of rimO mRNA. Its function is as follows. mRNA for psbA2, one of the core proteins in photosystem II, is degraded in the dark under control of a cis-acting AU-rich box in its 5'-UTR. RNase E cuts in this box, suggesting it is involved in this dark-induced mRNA instability. In terms of biological role, CRISPR (clustered regularly interspaced short palindromic repeat) is an adaptive immune system that provides protection against mobile genetic elements (viruses, transposable elements and conjugative plasmids). CRISPR clusters contain spacers, sequences complementary to antecedent mobile elements, and target invading nucleic acids. CRISPR clusters are transcribed and processed into CRISPR RNA (crRNA). Endogenous RNase E is required for correct processing of pre-crRNA for the CRISPR3 subtype III-B system in this genome (genes sll7080 to sll7095). This CRISPR3 system does not include a cas6 gene, which is the usual RNase involved in crRNA maturation. The sequence is that of Ribonuclease E from Synechocystis sp. (strain ATCC 27184 / PCC 6803 / Kazusa).